Here is a 273-residue protein sequence, read N- to C-terminus: 4-hydroxy-tetrahydrodipicolinate reductase (273 aa).

Residues 12-17 (GAGGRM) and E38 contribute to the NAD(+) site. An NADP(+)-binding site is contributed by R39. NAD(+) is bound by residues 102–104 (GTT) and 126–129 (AANF). H159 (proton donor/acceptor) is an active-site residue. Position 160 (H160) interacts with (S)-2,3,4,5-tetrahydrodipicolinate. Catalysis depends on K163, which acts as the Proton donor. 169 to 170 (GT) lines the (S)-2,3,4,5-tetrahydrodipicolinate pocket.

The protein belongs to the DapB family. As to quaternary structure, homotetramer.

Its subcellular location is the cytoplasm. The enzyme catalyses (S)-2,3,4,5-tetrahydrodipicolinate + NAD(+) + H2O = (2S,4S)-4-hydroxy-2,3,4,5-tetrahydrodipicolinate + NADH + H(+). It catalyses the reaction (S)-2,3,4,5-tetrahydrodipicolinate + NADP(+) + H2O = (2S,4S)-4-hydroxy-2,3,4,5-tetrahydrodipicolinate + NADPH + H(+). Its pathway is amino-acid biosynthesis; L-lysine biosynthesis via DAP pathway; (S)-tetrahydrodipicolinate from L-aspartate: step 4/4. Functionally, catalyzes the conversion of 4-hydroxy-tetrahydrodipicolinate (HTPA) to tetrahydrodipicolinate. The protein is 4-hydroxy-tetrahydrodipicolinate reductase of Salmonella paratyphi A (strain ATCC 9150 / SARB42).